The chain runs to 312 residues: MPSAIEAIYIILIAGELTIGIWGNGFIVLVNCIDWLKRRDVSLIDIILISLAISRICLLXVISLDGFFMLLFPTTYGNSVLVSIVBIVWTFANNSSLWFTSCLSIFYLLKIANISHPFFFWLKLKINKVILAILLGSFLISLVISVXMNDDMWYHLFKVSHEENITWEFKVSKIPGTFKQLTLNLGAMVPFILCLISFSLLLFSLVRHTKQIQLXATGFRDPSTEAHMRAIKAVIIFLLLLIVYYPVFLVMTSSALIPQGKLVLMIGDIVTITFPSSHSFILIMGNSKLREAFLKMLRFVKRFLRRRKPFVP.

Over 1 to 9 (MPSAIEAIY) the chain is Extracellular. The helical transmembrane segment at 10–32 (IILIAGELTIGIWGNGFIVLVNC) threads the bilayer. Topologically, residues 33 to 52 (IDWLKRRDVSLIDIILISLA) are cytoplasmic. A helical transmembrane segment spans residues 53 to 72 (ISRICLLXVISLDGFFMLLF). The Extracellular portion of the chain corresponds to 73 to 86 (PTTYGNSVLVSIVB). A helical membrane pass occupies residues 87 to 109 (IVWTFANNSSLWFTSCLSIFYLL). The Cytoplasmic portion of the chain corresponds to 110–128 (KIANISHPFFFWLKLKINK). Residues 129–146 (VILAILLGSFLISLVISV) form a helical membrane-spanning segment. Residues 147 to 180 (XMNDDMWYHLFKVSHEENITWEFKVSKIPGTFKQ) are Extracellular-facing. The N-linked (GlcNAc...) asparagine glycan is linked to Asn164. The chain crosses the membrane as a helical span at residues 181 to 203 (LTLNLGAMVPFILCLISFSLLLF). At 204–234 (SLVRHTKQIQLXATGFRDPSTEAHMRAIKAV) the chain is on the cytoplasmic side. The helical transmembrane segment at 235–257 (IIFLLLLIVYYPVFLVMTSSALI) threads the bilayer. Over 258–261 (PQGK) the chain is Extracellular. The helical transmembrane segment at 262–284 (LVLMIGDIVTITFPSSHSFILIM) threads the bilayer. The Cytoplasmic segment spans residues 285 to 312 (GNSKLREAFLKMLRFVKRFLRRRKPFVP).

The protein belongs to the G-protein coupled receptor T2R family.

It localises to the membrane. Gustducin-coupled receptor implicated in the perception of bitter compounds in the oral cavity and the gastrointestinal tract. Signals through PLCB2 and the calcium-regulated cation channel TRPM5. In Pongo pygmaeus (Bornean orangutan), this protein is Taste receptor type 2 member 9 (TAS2R9).